Reading from the N-terminus, the 438-residue chain is Enolase (438 aa).

Position 163 (Gln-163) interacts with (2R)-2-phosphoglycerate. The Proton donor role is filled by Glu-205. 3 residues coordinate Mg(2+): Asp-243, Glu-292, and Asp-319. (2R)-2-phosphoglycerate-binding residues include Lys-344, Arg-373, Ser-374, and Lys-395. Lys-344 acts as the Proton acceptor in catalysis.

The protein belongs to the enolase family. Mg(2+) serves as cofactor.

Its subcellular location is the cytoplasm. The protein localises to the secreted. It is found in the cell surface. The catalysed reaction is (2R)-2-phosphoglycerate = phosphoenolpyruvate + H2O. It participates in carbohydrate degradation; glycolysis; pyruvate from D-glyceraldehyde 3-phosphate: step 4/5. Catalyzes the reversible conversion of 2-phosphoglycerate (2-PG) into phosphoenolpyruvate (PEP). It is essential for the degradation of carbohydrates via glycolysis. The chain is Enolase from Streptococcus agalactiae.